A 256-amino-acid chain; its full sequence is Mannose-specific lectin 1 (256 aa).

Residues 1–23 (MAKLLLFLLPAILGLLVPRSAVA) form the signal peptide. Bulb-type lectin domains are found at residues 26 to 131 (TNYL…PWVR) and 145 to 252 (NNLL…SKRS). Residues 51 to 55 (QDDCN), Y59, W63, Q64, 170 to 174 (QGDCN), Y178, and 182 to 185 (YGWQ) contribute to the beta-D-mannose site. The Carbohydrate-binding motif 1 signature appears at 51 to 59 (QDDCNLVLY). 2 disulfide bridges follow: C54/C74 and C173/C195. The Carbohydrate-binding motif 2 motif lies at 170 to 178 (QGDCNLVLY).

As to quaternary structure, forms heterodimers.

The protein resides in the secreted. In terms of biological role, mannose-specific lectin. Shows agglutinating activity towards erythrocytes from rabbit. The protein is Mannose-specific lectin 1 of Remusatia vivipara (Hitchhiker elephant ear).